Consider the following 185-residue polypeptide: Ribonuclease HII (185 aa).

The RNase H type-2 domain maps to 1–185 (MIILGIDEAG…KSYKPIQLLL (185 aa)). 3 residues coordinate a divalent metal cation: Asp7, Glu8, and Asp99.

This sequence belongs to the RNase HII family. Mn(2+) serves as cofactor. The cofactor is Mg(2+).

It is found in the cytoplasm. The enzyme catalyses Endonucleolytic cleavage to 5'-phosphomonoester.. Endonuclease that specifically degrades the RNA of RNA-DNA hybrids. The polypeptide is Ribonuclease HII (Francisella tularensis subsp. novicida (strain U112)).